Here is a 76-residue protein sequence, read N- to C-terminus: Small ribosomal subunit protein bS18 (76 aa).

The protein belongs to the bacterial ribosomal protein bS18 family. As to quaternary structure, part of the 30S ribosomal subunit. Forms a tight heterodimer with protein bS6.

Binds as a heterodimer with protein bS6 to the central domain of the 16S rRNA, where it helps stabilize the platform of the 30S subunit. The polypeptide is Small ribosomal subunit protein bS18 (Xylella fastidiosa (strain M23)).